The chain runs to 352 residues: Photosystem II D2 protein (352 aa).

Residues 1-31 (MTIAVGRAPVERGWFDVLDDWLKRDRFVFIG) are Cytoplasmic-facing. A helical transmembrane segment spans residues 32-53 (WSGLLLFPCAFMALGGWLTGTT). Topologically, residues 54–108 (FVTSWYTHGLASSYLEGANFLTVAVSSPADAFGHSLLFLWGPEAQGNLTRWFQIG) are lumenal, thylakoid. A helical transmembrane segment spans residues 109–131 (GLWPFVALHGAFGLIGFMLRQFE). A chlorophyll a-binding site is contributed by histidine 117. Glutamine 129 provides a ligand contact to pheophytin a. The Cytoplasmic portion of the chain corresponds to 132–140 (ISRLVGIRP). Residues 141-162 (YNAIAFSGPIAVFVSVFLMYPL) form a helical membrane-spanning segment. Position 142 (asparagine 142) interacts with pheophytin a. Residues 163 to 190 (GQSSWFFAPSFGVAGIFRFILFLQGFHN) are Lumenal, thylakoid-facing. A helical transmembrane segment spans residues 191-217 (WTLNPFHMMGVAGILGGALLCAIHGAT). Histidine 197 provides a ligand contact to chlorophyll a. A plastoquinone contacts are provided by histidine 214 and phenylalanine 261. Histidine 214 contributes to the Fe cation binding site. Residues 218–265 (VENTLFEDGEDSNTFRAFEPTQAEETYSMVTANRFWSQIFGIAFSNKR) lie on the Cytoplasmic side of the membrane. Residues 266-288 (WLHFFMLFVPVTGLWMSSVGIVG) traverse the membrane as a helical segment. Histidine 268 contacts Fe cation. Residues 289–352 (LALNLRAYDF…EEVLPRGNAL (64 aa)) lie on the Lumenal, thylakoid side of the membrane.

The protein belongs to the reaction center PufL/M/PsbA/D family. As to quaternary structure, PSII is composed of 1 copy each of membrane proteins PsbA, PsbB, PsbC, PsbD, PsbE, PsbF, PsbH, PsbI, PsbJ, PsbK, PsbL, PsbM, PsbT, PsbX, PsbY, PsbZ, Psb30/Ycf12, peripheral proteins PsbO, CyanoQ (PsbQ), PsbU, PsbV and a large number of cofactors. It forms dimeric complexes. The D1/D2 heterodimer binds P680, chlorophylls that are the primary electron donor of PSII, and subsequent electron acceptors. It shares a non-heme iron and each subunit binds pheophytin, quinone, additional chlorophylls, carotenoids and lipids. There is also a Cl(-1) ion associated with D1 and D2, which is required for oxygen evolution. The PSII complex binds additional chlorophylls, carotenoids and specific lipids. serves as cofactor.

Its subcellular location is the cellular thylakoid membrane. The enzyme catalyses 2 a plastoquinone + 4 hnu + 2 H2O = 2 a plastoquinol + O2. Photosystem II (PSII) is a light-driven water:plastoquinone oxidoreductase that uses light energy to abstract electrons from H(2)O, generating O(2) and a proton gradient subsequently used for ATP formation. It consists of a core antenna complex that captures photons, and an electron transfer chain that converts photonic excitation into a charge separation. The D1/D2 (PsbA/PsbD) reaction center heterodimer binds P680, the primary electron donor of PSII as well as several subsequent electron acceptors. D2 is needed for assembly of a stable PSII complex. In Synechocystis sp. (strain ATCC 27184 / PCC 6803 / Kazusa), this protein is Photosystem II D2 protein.